Consider the following 295-residue polypeptide: Ribosomal protein L11 methyltransferase (295 aa).

The S-adenosyl-L-methionine site is built by threonine 145, glycine 166, aspartate 188, and asparagine 230.

The protein belongs to the methyltransferase superfamily. PrmA family.

The protein resides in the cytoplasm. It carries out the reaction L-lysyl-[protein] + 3 S-adenosyl-L-methionine = N(6),N(6),N(6)-trimethyl-L-lysyl-[protein] + 3 S-adenosyl-L-homocysteine + 3 H(+). Its function is as follows. Methylates ribosomal protein L11. This is Ribosomal protein L11 methyltransferase from Haemophilus influenzae (strain PittEE).